A 623-amino-acid polypeptide reads, in one-letter code: DNA mismatch repair protein MutL (623 aa).

Positions 353 to 368 (AQQSAPRPANSYSPAS) are enriched in polar residues. Residues 353-389 (AQQSAPRPANSYSPASWRTAPPAPRSEWSPQTAHPAH) form a disordered region.

The protein belongs to the DNA mismatch repair MutL/HexB family.

Its function is as follows. This protein is involved in the repair of mismatches in DNA. It is required for dam-dependent methyl-directed DNA mismatch repair. May act as a 'molecular matchmaker', a protein that promotes the formation of a stable complex between two or more DNA-binding proteins in an ATP-dependent manner without itself being part of a final effector complex. This chain is DNA mismatch repair protein MutL, found in Brucella melitensis biotype 1 (strain ATCC 23456 / CCUG 17765 / NCTC 10094 / 16M).